Reading from the N-terminus, the 221-residue chain is Crossover junction endodeoxyribonuclease RuvC (221 aa).

Active-site residues include aspartate 12, glutamate 73, and aspartate 146. Mg(2+) contacts are provided by aspartate 12, glutamate 73, and aspartate 146. Residues 169 to 221 are disordered; that stretch reads SQYSEQELEKRRRVQQGKLGKAKSTYNAEQAQSHASDPAKAAHPSQFQRTDTN. The span at 192–203 shows a compositional bias: polar residues; it reads STYNAEQAQSHA.

The protein belongs to the RuvC family. Homodimer which binds Holliday junction (HJ) DNA. The HJ becomes 2-fold symmetrical on binding to RuvC with unstacked arms; it has a different conformation from HJ DNA in complex with RuvA. In the full resolvosome a probable DNA-RuvA(4)-RuvB(12)-RuvC(2) complex forms which resolves the HJ. The cofactor is Mg(2+).

It is found in the cytoplasm. The enzyme catalyses Endonucleolytic cleavage at a junction such as a reciprocal single-stranded crossover between two homologous DNA duplexes (Holliday junction).. In terms of biological role, the RuvA-RuvB-RuvC complex processes Holliday junction (HJ) DNA during genetic recombination and DNA repair. Endonuclease that resolves HJ intermediates. Cleaves cruciform DNA by making single-stranded nicks across the HJ at symmetrical positions within the homologous arms, yielding a 5'-phosphate and a 3'-hydroxyl group; requires a central core of homology in the junction. The consensus cleavage sequence is 5'-(A/T)TT(C/G)-3'. Cleavage occurs on the 3'-side of the TT dinucleotide at the point of strand exchange. HJ branch migration catalyzed by RuvA-RuvB allows RuvC to scan DNA until it finds its consensus sequence, where it cleaves and resolves the cruciform DNA. The protein is Crossover junction endodeoxyribonuclease RuvC of Corynebacterium glutamicum (strain ATCC 13032 / DSM 20300 / JCM 1318 / BCRC 11384 / CCUG 27702 / LMG 3730 / NBRC 12168 / NCIMB 10025 / NRRL B-2784 / 534).